We begin with the raw amino-acid sequence, 213 residues long: UPF0301 protein RPC_0788 (213 aa).

The disordered stretch occupies residues Met1–Ser20.

This sequence belongs to the UPF0301 (AlgH) family.

In Rhodopseudomonas palustris (strain BisB18), this protein is UPF0301 protein RPC_0788.